A 466-amino-acid chain; its full sequence is 3-isopropylmalate dehydratase large subunit (466 aa).

Cys-347, Cys-407, and Cys-410 together coordinate [4Fe-4S] cluster.

The protein belongs to the aconitase/IPM isomerase family. LeuC type 1 subfamily. In terms of assembly, heterodimer of LeuC and LeuD. It depends on [4Fe-4S] cluster as a cofactor.

It carries out the reaction (2R,3S)-3-isopropylmalate = (2S)-2-isopropylmalate. The protein operates within amino-acid biosynthesis; L-leucine biosynthesis; L-leucine from 3-methyl-2-oxobutanoate: step 2/4. Functionally, catalyzes the isomerization between 2-isopropylmalate and 3-isopropylmalate, via the formation of 2-isopropylmaleate. This is 3-isopropylmalate dehydratase large subunit from Blochmanniella floridana.